A 237-amino-acid polypeptide reads, in one-letter code: Orotidine 5'-phosphate decarboxylase (237 aa).

Substrate-binding positions include aspartate 10, lysine 33, 60 to 69, threonine 123, arginine 185, glutamine 194, glycine 214, and arginine 215; that span reads DLKLHDIPNT. Lysine 62 functions as the Proton donor in the catalytic mechanism.

Belongs to the OMP decarboxylase family. Type 1 subfamily. Homodimer.

It carries out the reaction orotidine 5'-phosphate + H(+) = UMP + CO2. The protein operates within pyrimidine metabolism; UMP biosynthesis via de novo pathway; UMP from orotate: step 2/2. Catalyzes the decarboxylation of orotidine 5'-monophosphate (OMP) to uridine 5'-monophosphate (UMP). In Enterococcus faecalis (strain ATCC 700802 / V583), this protein is Orotidine 5'-phosphate decarboxylase.